The sequence spans 234 residues: Phosphoribosylformylglycinamidine synthase subunit PurQ (234 aa).

Residues T5–A234 enclose the Glutamine amidotransferase type-1 domain. The Nucleophile role is filled by C89. Catalysis depends on residues H206 and E208.

In terms of assembly, part of the FGAM synthase complex composed of 1 PurL, 1 PurQ and 2 PurS subunits.

Its subcellular location is the cytoplasm. It catalyses the reaction N(2)-formyl-N(1)-(5-phospho-beta-D-ribosyl)glycinamide + L-glutamine + ATP + H2O = 2-formamido-N(1)-(5-O-phospho-beta-D-ribosyl)acetamidine + L-glutamate + ADP + phosphate + H(+). The catalysed reaction is L-glutamine + H2O = L-glutamate + NH4(+). It participates in purine metabolism; IMP biosynthesis via de novo pathway; 5-amino-1-(5-phospho-D-ribosyl)imidazole from N(2)-formyl-N(1)-(5-phospho-D-ribosyl)glycinamide: step 1/2. Its function is as follows. Part of the phosphoribosylformylglycinamidine synthase complex involved in the purines biosynthetic pathway. Catalyzes the ATP-dependent conversion of formylglycinamide ribonucleotide (FGAR) and glutamine to yield formylglycinamidine ribonucleotide (FGAM) and glutamate. The FGAM synthase complex is composed of three subunits. PurQ produces an ammonia molecule by converting glutamine to glutamate. PurL transfers the ammonia molecule to FGAR to form FGAM in an ATP-dependent manner. PurS interacts with PurQ and PurL and is thought to assist in the transfer of the ammonia molecule from PurQ to PurL. This is Phosphoribosylformylglycinamidine synthase subunit PurQ from Chlorobaculum tepidum (strain ATCC 49652 / DSM 12025 / NBRC 103806 / TLS) (Chlorobium tepidum).